The sequence spans 70 residues: Drosomycin (70 aa).

Residues 1–20 (MMQIKYLFALFAVLMLVVLG) form the signal peptide. Positions 21-26 (ANEADA) are excised as a propeptide. 4 disulfides stabilise this stretch: Cys28/Cys70, Cys37/Cys59, Cys45/Cys65, and Cys49/Cys67. Asn42 carries N-linked (GlcNAc...) asparagine glycosylation.

As to expression, hemolymph (at protein level). Synthesized in the fat body and is secreted into the blood. In larvae, expressed in the visceral branches and posterior spiracles of the trachea.

The protein localises to the secreted. Its function is as follows. Possesses antifungal activity and is active against a relatively broad spectrum of filamentous fungi. It inhibits spore germination at high concentrations and at low concentrations delays growth of hyphae which subsequently exhibit abnormal morphology. Spz C-106 in the hemolymph controls expression of the antifungal peptide by acting as a ligand of Tl and inducing an intracellular signaling pathway. Part of a psh-dependent Toll pathway, which may function in activating the systematic immune response in response to localized melanization of the tracheal system. This Drosophila melanogaster (Fruit fly) protein is Drosomycin (Drs).